Reading from the N-terminus, the 510-residue chain is Nucleosome assembly protein 1-like 3 (510 aa).

Disordered regions lie at residues 1–99 (MAEA…LGTN) and 161–311 (PTEE…KRED). Positions 35–74 (SSSSSSSTSGSSSSSSTSGSSSSSGSGSSSSSSGSGSTSS) are enriched in low complexity. The segment covering 161–182 (PTEEECEWNSEDEEFSSDEEVQ) has biased composition (acidic residues). 3 stretches are compositionally biased toward basic and acidic residues: residues 200–229 (PKEN…EVPK), 235–246 (KAEEKADSKDCM), and 254–300 (EDPK…VDLK).

Belongs to the nucleosome assembly protein (NAP) family.

The protein resides in the nucleus. The chain is Nucleosome assembly protein 1-like 3 (NAP1L3) from Pongo abelii (Sumatran orangutan).